The sequence spans 481 residues: WD repeat-containing protein 55 homolog (481 aa).

Residues 1–116 form a disordered region; the sequence is MHTHNHFKTP…NRDVETNFDL (116 aa). Composition is skewed to acidic residues over residues 12–23, 31–46, and 68–81; these read DAEEVDDLDDEM, IEQEVLFESDSDDDGF, and DSFDPNAEDSDSDD. WD repeat units follow at residues 144–183, 188–227, 231–269, 272–311, 314–353, and 398–437; these read KLEDFVTDISFHPERNIIALATIIGDVHLYEYANEGNKLI, VHSKACRDVEFTEDGRNLLTCSKDKCVMVTDMETEKLKKL, AHDDAINTLHVLNENLFATGDDAGTVKLWDLRTKQHVFE, QIDDQVTQLLSNEQNTLLLATSADGYLTTFNIPGRKLYVQ, PYEEELNCMGIYRGDSKLVVGTSKGKLYSYNWGSFGYHCD, and QHNMPIEALDVNSTGELLASSSHNNDVRFWNVKYFEDFGD.

This sequence belongs to the WD repeat WDR55 family.

In Drosophila ananassae (Fruit fly), this protein is WD repeat-containing protein 55 homolog.